We begin with the raw amino-acid sequence, 245 residues long: 2,3-bisphosphoglycerate-dependent phosphoglycerate mutase (245 aa).

Residues 8–15, 21–22, R60, 87–90, K98, 114–115, and 183–184 each bind substrate; these read RHGQSLWN, TG, ERHY, RR, and GN. H9 (tele-phosphohistidine intermediate) is an active-site residue. Residue E87 is the Proton donor/acceptor of the active site.

Belongs to the phosphoglycerate mutase family. BPG-dependent PGAM subfamily.

The enzyme catalyses (2R)-2-phosphoglycerate = (2R)-3-phosphoglycerate. It functions in the pathway carbohydrate degradation; glycolysis; pyruvate from D-glyceraldehyde 3-phosphate: step 3/5. In terms of biological role, catalyzes the interconversion of 2-phosphoglycerate and 3-phosphoglycerate. The sequence is that of 2,3-bisphosphoglycerate-dependent phosphoglycerate mutase from Bacillus cereus (strain B4264).